A 396-amino-acid polypeptide reads, in one-letter code: Maltose/maltodextrin-binding periplasmic protein (396 aa).

An N-terminal signal peptide occupies residues Met-1 to Ala-26.

This sequence belongs to the bacterial solute-binding protein 1 family. In terms of assembly, the complex is composed of two ATP-binding proteins (MalK), two transmembrane proteins (MalG and MalF) and a solute-binding protein (MalE).

The protein localises to the periplasm. Its function is as follows. Part of the ABC transporter complex MalEFGK involved in maltose/maltodextrin import. Binds maltose and higher maltodextrins. In Escherichia coli O157:H7, this protein is Maltose/maltodextrin-binding periplasmic protein (malE).